The primary structure comprises 387 residues: Cysteine desulfurase IscS (387 aa).

Pyridoxal 5'-phosphate contacts are provided by residues 73–74, asparagine 155, glutamine 183, and 203–205; these read AT and SAH. Position 206 is an N6-(pyridoxal phosphate)lysine (lysine 206). Position 241 (threonine 241) interacts with pyridoxal 5'-phosphate. Cysteine 328 serves as the catalytic Cysteine persulfide intermediate. Cysteine 328 is a binding site for [2Fe-2S] cluster.

Belongs to the class-V pyridoxal-phosphate-dependent aminotransferase family. NifS/IscS subfamily. As to quaternary structure, homodimer. Forms a heterotetramer with IscU, interacts with other sulfur acceptors. It depends on pyridoxal 5'-phosphate as a cofactor.

Its subcellular location is the cytoplasm. It catalyses the reaction (sulfur carrier)-H + L-cysteine = (sulfur carrier)-SH + L-alanine. It functions in the pathway cofactor biosynthesis; iron-sulfur cluster biosynthesis. Master enzyme that delivers sulfur to a number of partners involved in Fe-S cluster assembly, tRNA modification or cofactor biosynthesis. Catalyzes the removal of elemental sulfur atoms from cysteine to produce alanine. Functions as a sulfur delivery protein for Fe-S cluster synthesis onto IscU, an Fe-S scaffold assembly protein, as well as other S acceptor proteins. The chain is Cysteine desulfurase IscS from Helicobacter pylori (strain ATCC 700392 / 26695) (Campylobacter pylori).